The following is a 178-amino-acid chain: Large ribosomal subunit protein uL6 (178 aa).

Belongs to the universal ribosomal protein uL6 family. Part of the 50S ribosomal subunit.

Its function is as follows. This protein binds to the 23S rRNA, and is important in its secondary structure. It is located near the subunit interface in the base of the L7/L12 stalk, and near the tRNA binding site of the peptidyltransferase center. The protein is Large ribosomal subunit protein uL6 of Corynebacterium jeikeium (strain K411).